The primary structure comprises 454 residues: Asparagine--tRNA ligase (454 aa).

The protein belongs to the class-II aminoacyl-tRNA synthetase family. As to quaternary structure, homodimer.

The protein resides in the cytoplasm. It carries out the reaction tRNA(Asn) + L-asparagine + ATP = L-asparaginyl-tRNA(Asn) + AMP + diphosphate + H(+). In Ureaplasma parvum serovar 3 (strain ATCC 27815 / 27 / NCTC 11736), this protein is Asparagine--tRNA ligase.